The chain runs to 523 residues: Cytochrome P450 52-N1 (523 aa).

The helical transmembrane segment at 5–25 threads the bilayer; sequence AVLGAFAAFLLYMDVLYPFVI. Position 469 (cysteine 469) interacts with heme.

It belongs to the cytochrome P450 family. Heme serves as cofactor.

The protein resides in the membrane. It catalyses the reaction an omega-methyl-long-chain fatty acid + reduced [NADPH--hemoprotein reductase] + O2 = an omega-hydroxy-long-chain fatty acid + oxidized [NADPH--hemoprotein reductase] + H2O + H(+). It carries out the reaction (9Z,12Z)-octadecadienoate + reduced [NADPH--hemoprotein reductase] + O2 = 18-hydroxy-(9Z,12Z)-octadecadienoate + oxidized [NADPH--hemoprotein reductase] + H2O + H(+). The catalysed reaction is (9Z)-octadecenoate + reduced [NADPH--hemoprotein reductase] + O2 = 18-hydroxy-(9Z)-octadecenoate + oxidized [NADPH--hemoprotein reductase] + H2O + H(+). The enzyme catalyses hexadecanoate + reduced [NADPH--hemoprotein reductase] + O2 = 16-hydroxyhexadecanoate + oxidized [NADPH--hemoprotein reductase] + H2O + H(+). It catalyses the reaction (9Z)-hexadecenoate + reduced [NADPH--hemoprotein reductase] + O2 = (9Z)-16-hydroxyhexadec-9-enoate + oxidized [NADPH--hemoprotein reductase] + H2O + H(+). It carries out the reaction octadecanoate + reduced [NADPH--hemoprotein reductase] + O2 = 18-hydroxyoctadecanoate + oxidized [NADPH--hemoprotein reductase] + H2O + H(+). Functionally, catalyzes the terminal (at the omega-position) hydroxylation of a fatty acid. Probably involved in alkane metabolism. Linoleic acid is the preferred substrate, but it acts on various other C-16, C-18 and C-20 saturated and unsaturated fatty acids, namely palmitic, palmitoleic, stearic, oleic, alpha-linoleic, arachidonic and myristic acid. In Starmerella bombicola (Yeast), this protein is Cytochrome P450 52-N1.